The chain runs to 307 residues: Nicotinamide/nicotinic acid mononucleotide adenylyltransferase 2 (307 aa).

2 residues coordinate NAD(+): Ser-16 and Phe-17. His-24 contributes to the ATP binding site. NAD(+)-binding residues include Trp-92 and Thr-95. S-palmitoyl cysteine attachment occurs at residues Cys-164 and Cys-165. Residues Gly-200, Asp-202, Leu-212, Trp-213, and Arg-232 each contribute to the NAD(+) site. Thr-271–Arg-274 contacts ATP.

Belongs to the eukaryotic NMN adenylyltransferase family. In terms of assembly, monomer. Mg(2+) serves as cofactor. Post-translationally, degraded in response to injured neurite. Degradation is caused by polyubiquitination by MYCBP2 after recognition by FBXO45. In terms of processing, palmitoylated; palmitoylation is required for membrane association.

The protein resides in the golgi apparatus membrane. The protein localises to the cytoplasmic vesicle membrane. It is found in the cytoplasm. It localises to the cell projection. Its subcellular location is the axon. The catalysed reaction is beta-nicotinamide D-ribonucleotide + ATP + H(+) = diphosphate + NAD(+). The enzyme catalyses nicotinate beta-D-ribonucleotide + ATP + H(+) = deamido-NAD(+) + diphosphate. It participates in cofactor biosynthesis; NAD(+) biosynthesis; NAD(+) from nicotinamide D-ribonucleotide: step 1/1. It functions in the pathway cofactor biosynthesis; NAD(+) biosynthesis; deamido-NAD(+) from nicotinate D-ribonucleotide: step 1/1. Inhibited by P1-(adenosine-5')-P3-(nicotinamide-riboside-5')-triphosphate (Np3AD) and P1-(adenosine-5')-P4-(nicotinamide-riboside-5')-tetraphosphate (Np4AD). Nicotinamide/nicotinate-nucleotide adenylyltransferase that acts as an axon maintenance factor. Axon survival factor required for the maintenance of healthy axons: acts by delaying Wallerian axon degeneration, an evolutionarily conserved process that drives the loss of damaged axons. Catalyzes the formation of NAD(+) from nicotinamide mononucleotide (NMN) and ATP. Can also use the deamidated form; nicotinic acid mononucleotide (NaMN) as substrate but with a lower efficiency. Cannot use triazofurin monophosphate (TrMP) as substrate. Also catalyzes the reverse reaction, i.e. the pyrophosphorolytic cleavage of NAD(+). For the pyrophosphorolytic activity prefers NAD(+), NADH and NaAD as substrates and degrades nicotinic acid adenine dinucleotide phosphate (NHD) less effectively. Fails to cleave phosphorylated dinucleotides NADP(+), NADPH and NaADP(+). Also acts as an activator of ADP-ribosylation by supporting the catalytic activity of PARP16 and promoting mono-ADP-ribosylation of ribosomes by PARP16. May be involved in the maintenance of axonal integrity. This Bos taurus (Bovine) protein is Nicotinamide/nicotinic acid mononucleotide adenylyltransferase 2 (NMNAT2).